The chain runs to 89 residues: Small ribosomal subunit protein bS20 (89 aa).

A compositionally biased stretch (basic residues) spans 1-12 (MANIKSAKKRAK). Positions 1-24 (MANIKSAKKRAKQTVVRNERNTGQ) are disordered.

It belongs to the bacterial ribosomal protein bS20 family.

Functionally, binds directly to 16S ribosomal RNA. The sequence is that of Small ribosomal subunit protein bS20 from Xanthomonas campestris pv. campestris (strain 8004).